The primary structure comprises 238 residues: UPF0758 protein Ajs_3450 (238 aa).

The 123-residue stretch at Val116–Val238 folds into the MPN domain. Residues His187, His189, and Asp200 each contribute to the Zn(2+) site. Positions His187 to Asp200 match the JAMM motif motif.

This sequence belongs to the UPF0758 family.

This Acidovorax sp. (strain JS42) protein is UPF0758 protein Ajs_3450.